The chain runs to 223 residues: Neurotrophic factor BDNF precursor form (223 aa).

Residues 1–5 (SCMKA) form the signal peptide. The propeptide occupies 6 to 114 (APMKEVSIRG…AANMSMRVRR (109 aa)). N-linked (GlcNAc...) asparagine glycosylation occurs at Asn-107. Cystine bridges form between Cys-127/Cys-194 and Cys-172/Cys-223.

It belongs to the NGF-beta family.

It localises to the secreted. In terms of biological role, promotes the survival of neuronal populations that are all located either in the central nervous system or directly connected to it. This Charina bottae (Northern rubber boa) protein is Neurotrophic factor BDNF precursor form (BDNF).